A 74-amino-acid chain; its full sequence is Exodeoxyribonuclease 7 small subunit (74 aa).

The protein belongs to the XseB family. In terms of assembly, heterooligomer composed of large and small subunits.

Its subcellular location is the cytoplasm. The enzyme catalyses Exonucleolytic cleavage in either 5'- to 3'- or 3'- to 5'-direction to yield nucleoside 5'-phosphates.. In terms of biological role, bidirectionally degrades single-stranded DNA into large acid-insoluble oligonucleotides, which are then degraded further into small acid-soluble oligonucleotides. This chain is Exodeoxyribonuclease 7 small subunit, found in Thermotoga neapolitana (strain ATCC 49049 / DSM 4359 / NBRC 107923 / NS-E).